A 320-amino-acid chain; its full sequence is Olfactory receptor 51E2 (320 aa).

Residues 1–27 lie on the Extracellular side of the membrane; sequence MSSCNFTHATFLLIGIPGLEEAHFWFG. Asn5 carries an N-linked (GlcNAc...) asparagine glycan. The chain crosses the membrane as a helical span at residues 28–48; the sequence is FPLLSMYAVALFGNCIVVFIV. Residues 49 to 53 lie on the Cytoplasmic side of the membrane; the sequence is RTERS. A helical membrane pass occupies residues 54-74; the sequence is LHAPMYLFLCMLAAIDLALST. The Extracellular segment spans residues 75-98; that stretch reads STMPKILALFWFDSREITFDACLA. A disulfide bridge links Cys96 with Cys178. Residues 99–119 traverse the membrane as a helical segment; it reads QMFFIHTLSAIESTILLAMAF. Residues 120–141 are Cytoplasmic-facing; it reads DRYVAICHPLRHAAVLNNTVTV. A helical membrane pass occupies residues 142–162; the sequence is QIGMVALVRGSLFFFPLPLLI. Topologically, residues 163 to 200 are extracellular; it reads KRLAFCHSNVLSHSYCVHQDVMKLAYTDTLPNVVYGLT. Residues 201–221 form a helical membrane-spanning segment; that stretch reads AILLVMGVDVMFISLSYFLII. Residues 222–239 lie on the Cytoplasmic side of the membrane; it reads RTVLQLPSKSERAKAFGT. Residues 240–260 traverse the membrane as a helical segment; the sequence is CVSHISVVLAFYVPLIGLSVV. Residues 261–269 lie on the Extracellular side of the membrane; that stretch reads HRFGNSLDP. The helical transmembrane segment at 270–290 threads the bilayer; sequence IVHVLMGDVYLLLPPVINPII. The Cytoplasmic portion of the chain corresponds to 291 to 320; the sequence is YGAKTKQIRTRVLAMFKISCDKDIEAGGNT.

This sequence belongs to the G-protein coupled receptor 1 family. In brain, expressed in medulla oblongata by cells close to the fourth ventricle, in the area postrema, the nucleus tractus solitarius. Expressed in olfactory epithelium and vomeronasal organ. Expressed in kidney by large renal vessels, renal afferent arterioles, and extrarenal vascular beds. In small resistance vessels the expression is restricted to cells of the juxtaglomerular afferent arteriole, which mediate renin secretion. Also detected in small blood vessels in a variety of tissues including heart, diaphragm, skeletal muscle, and skin. In the heart, esophagus, and stomach it is detected in axons of autonomic neurons and neurons of the enteric plexus. Also detected in colon and liver. Expressed in the glomus cells of the carotid body.

It is found in the cell membrane. The protein localises to the early endosome membrane. Its function is as follows. Olfactory receptor. The activity of this receptor is probably mediated by G-proteins which induce elevation of intracellular Ca(2+), cAMP and activation of phosphorylation of the protein kinases PKA and MAPK3/MAPK1. Activation of OR51E2 may affect melanocyte proliferation, differentiation, and melanogenesis and may increase proliferation and migration of primary retinal pigment epithelial (RPE) cells. Activated by the short chain fatty acids (SCFA), acetate and propionate. In response to SCFA, may positively regulate renin secretion and increase blood pressure. May also be activated by steroid hormones and regulate cell proliferation. Activated by L-lactate in glomus cells. The protein is Olfactory receptor 51E2 (Or51e2) of Mus musculus (Mouse).